The sequence spans 223 residues: Octanoyltransferase (223 aa).

The BPL/LPL catalytic domain maps to 35–214 (GEARELIWLL…HFPAMLAGLR (180 aa)). Residues 74 to 81 (RGGRYTYH), 145 to 147 (AIG), and 158 to 160 (GFS) contribute to the substrate site. The active-site Acyl-thioester intermediate is the C176.

Belongs to the LipB family.

The protein resides in the cytoplasm. The enzyme catalyses octanoyl-[ACP] + L-lysyl-[protein] = N(6)-octanoyl-L-lysyl-[protein] + holo-[ACP] + H(+). The protein operates within protein modification; protein lipoylation via endogenous pathway; protein N(6)-(lipoyl)lysine from octanoyl-[acyl-carrier-protein]: step 1/2. Catalyzes the transfer of endogenously produced octanoic acid from octanoyl-acyl-carrier-protein onto the lipoyl domains of lipoate-dependent enzymes. Lipoyl-ACP can also act as a substrate although octanoyl-ACP is likely to be the physiological substrate. In Rhizorhabdus wittichii (strain DSM 6014 / CCUG 31198 / JCM 15750 / NBRC 105917 / EY 4224 / RW1) (Sphingomonas wittichii), this protein is Octanoyltransferase.